We begin with the raw amino-acid sequence, 592 residues long: Glycosyltransferase 25 family member (592 aa).

Positions 1 to 13 (MLALLLTTTIVSG) are cleaved as a signal peptide. N-linked (GlcNAc...) asparagine glycans are attached at residues Asn-249 and Asn-510. Basic and acidic residues-rich tracts occupy residues 552-563 (RIQEPKKGDKEQ) and 579-592 (GEHD…RSEL). The segment at 552–592 (RIQEPKKGDKEQLPNAPALLSESGIGQGEHDLETKNRRSEL) is disordered. Residues 589–592 (RSEL) carry the Prevents secretion from ER motif.

Belongs to the glycosyltransferase 25 family.

Its subcellular location is the endoplasmic reticulum lumen. The protein is Glycosyltransferase 25 family member of Anopheles gambiae (African malaria mosquito).